The chain runs to 392 residues: MKYVVLLGDGMADWPMEALGGRTPLQVARKPNMDSIARIGRCGLARTVPEGMTPGSDVANLSIMGYDPRRYYTGRAPLEAAAMRIPLGEKEVAFRCNFVTVMDGIMDDYSAGHITSEEGAEIAESLKKVIPGGRIYPGVSYRNIVVLKVCRDAVCTPPHDIMGKPISDHLPRGDDAHILIDIMERARPLLEEHPVNRRRVSMGLKPANMIWLWGQGPAPSMPRFHEIYGLKGAVISAVDLLKGLGVCAGWRVIDVPGATGTIDTNYAGKVRAALEALGSVDLVYLHIEAPDEAAHSGDVEQKIRAIELFDERVVGPMIHGLERSGEAWRVLLLPDHPTPIEIRTHSTDPVPFAIAGSGVCVDSVDAFDEISASEGGYGMIEGNDLIRLLIAG.

It belongs to the BPG-independent phosphoglycerate mutase family. A-PGAM subfamily.

It carries out the reaction (2R)-2-phosphoglycerate = (2R)-3-phosphoglycerate. The protein operates within carbohydrate degradation; glycolysis; pyruvate from D-glyceraldehyde 3-phosphate: step 3/5. In terms of biological role, catalyzes the interconversion of 2-phosphoglycerate and 3-phosphoglycerate. This chain is 2,3-bisphosphoglycerate-independent phosphoglycerate mutase, found in Methanothrix thermoacetophila (strain DSM 6194 / JCM 14653 / NBRC 101360 / PT) (Methanosaeta thermophila).